We begin with the raw amino-acid sequence, 344 residues long: Ferrochelatase (344 aa).

Fe cation is bound by residues histidine 214 and glutamate 295.

Belongs to the ferrochelatase family.

The protein localises to the cytoplasm. It carries out the reaction heme b + 2 H(+) = protoporphyrin IX + Fe(2+). It functions in the pathway porphyrin-containing compound metabolism; protoheme biosynthesis; protoheme from protoporphyrin-IX: step 1/1. Functionally, catalyzes the ferrous insertion into protoporphyrin IX. The polypeptide is Ferrochelatase (Agrobacterium fabrum (strain C58 / ATCC 33970) (Agrobacterium tumefaciens (strain C58))).